Here is a 397-residue protein sequence, read N- to C-terminus: 2,3,4,5-tetrahydropyridine-2,6-dicarboxylate N-succinyltransferase (397 aa).

Catalysis depends on glutamate 265, which acts as the Acyl-anhydride intermediate. Succinyl-CoA contacts are provided by residues arginine 267, glycine 282, serine 285, alanine 308, 323–324 (DA), glycine 331, lysine 360, and 373–376 (RQNS).

It belongs to the type 2 tetrahydrodipicolinate N-succinyltransferase family. Homotrimer.

The protein localises to the cytoplasm. It catalyses the reaction (S)-2,3,4,5-tetrahydrodipicolinate + succinyl-CoA + H2O = (S)-2-succinylamino-6-oxoheptanedioate + CoA. Its pathway is amino-acid biosynthesis; L-lysine biosynthesis via DAP pathway; LL-2,6-diaminopimelate from (S)-tetrahydrodipicolinate (succinylase route): step 1/3. Catalyzes the conversion of the cyclic tetrahydrodipicolinate (THDP) into the acyclic N-succinyl-L-2-amino-6-oxopimelate using succinyl-CoA. This Sulfurovum sp. (strain NBC37-1) protein is 2,3,4,5-tetrahydropyridine-2,6-dicarboxylate N-succinyltransferase.